Consider the following 333-residue polypeptide: Ketol-acid reductoisomerase (NADP(+)) (333 aa).

The KARI N-terminal Rossmann domain occupies A2–T182. Residues Y25 to Q28, S51, S53, and D83 to Q86 contribute to the NADP(+) site. The active site involves H108. G134 is a binding site for NADP(+). In terms of domain architecture, KARI C-terminal knotted spans T183–V328. The Mg(2+) site is built by D191, E195, E227, and E231. S252 is a binding site for substrate.

This sequence belongs to the ketol-acid reductoisomerase family. The cofactor is Mg(2+).

It catalyses the reaction (2R)-2,3-dihydroxy-3-methylbutanoate + NADP(+) = (2S)-2-acetolactate + NADPH + H(+). It carries out the reaction (2R,3R)-2,3-dihydroxy-3-methylpentanoate + NADP(+) = (S)-2-ethyl-2-hydroxy-3-oxobutanoate + NADPH + H(+). It participates in amino-acid biosynthesis; L-isoleucine biosynthesis; L-isoleucine from 2-oxobutanoate: step 2/4. Its pathway is amino-acid biosynthesis; L-valine biosynthesis; L-valine from pyruvate: step 2/4. Involved in the biosynthesis of branched-chain amino acids (BCAA). Catalyzes an alkyl-migration followed by a ketol-acid reduction of (S)-2-acetolactate (S2AL) to yield (R)-2,3-dihydroxy-isovalerate. In the isomerase reaction, S2AL is rearranged via a Mg-dependent methyl migration to produce 3-hydroxy-3-methyl-2-ketobutyrate (HMKB). In the reductase reaction, this 2-ketoacid undergoes a metal-dependent reduction by NADPH to yield (R)-2,3-dihydroxy-isovalerate. The polypeptide is Ketol-acid reductoisomerase (NADP(+)) (Streptomyces avermitilis (strain ATCC 31267 / DSM 46492 / JCM 5070 / NBRC 14893 / NCIMB 12804 / NRRL 8165 / MA-4680)).